The sequence spans 624 residues: Chaperone protein HtpG (624 aa).

An a; substrate-binding region spans residues 1 to 336 (MKGQETRGFQ…SNDLPLNVSR (336 aa)). The tract at residues 337 to 552 (EILQDSTVTR…ADEMGTQMAK (216 aa)) is b. Residues 553–624 (LFAAAGQAMP…IKRVNALLLG (72 aa)) are c.

It belongs to the heat shock protein 90 family. In terms of assembly, homodimer.

It localises to the cytoplasm. Its function is as follows. Molecular chaperone. Has ATPase activity. The chain is Chaperone protein HtpG from Enterobacter sp. (strain 638).